We begin with the raw amino-acid sequence, 179 residues long: ATP synthase subunit delta (179 aa).

The protein belongs to the ATPase delta chain family. F-type ATPases have 2 components, F(1) - the catalytic core - and F(0) - the membrane proton channel. F(1) has five subunits: alpha(3), beta(3), gamma(1), delta(1), epsilon(1). F(0) has three main subunits: a(1), b(2) and c(10-14). The alpha and beta chains form an alternating ring which encloses part of the gamma chain. F(1) is attached to F(0) by a central stalk formed by the gamma and epsilon chains, while a peripheral stalk is formed by the delta and b chains.

The protein localises to the cell inner membrane. In terms of biological role, f(1)F(0) ATP synthase produces ATP from ADP in the presence of a proton or sodium gradient. F-type ATPases consist of two structural domains, F(1) containing the extramembraneous catalytic core and F(0) containing the membrane proton channel, linked together by a central stalk and a peripheral stalk. During catalysis, ATP synthesis in the catalytic domain of F(1) is coupled via a rotary mechanism of the central stalk subunits to proton translocation. Its function is as follows. This protein is part of the stalk that links CF(0) to CF(1). It either transmits conformational changes from CF(0) to CF(1) or is implicated in proton conduction. The sequence is that of ATP synthase subunit delta from Alkalilimnicola ehrlichii (strain ATCC BAA-1101 / DSM 17681 / MLHE-1).